The following is a 236-amino-acid chain: uncharacterized protein (236 aa).

The span at 1–12 (MKLLGHRKSHGH) shows a compositional bias: basic residues. The tract at residues 1 to 108 (MKLLGHRKSH…KAANRARMTE (108 aa)) is disordered. Positions 13–31 (QRADASPDAGSKDGCRPDS) are enriched in basic and acidic residues. The span at 32–47 (GRTSGSDTSRGSQTTG) shows a compositional bias: low complexity. Residues 52-65 (PTPKRNQSRRHTKK) show a composition bias toward basic residues. A compositionally biased stretch (low complexity) spans 67-78 (PVAPAPMTAAQA). The span at 90–108 (LSREERRAEKAANRARMTE) shows a compositional bias: basic and acidic residues. Transmembrane regions (helical) follow at residues 142–162 (NLLGLFMPSALTLLFVMFAVP) and 166–186 (FYLSPAMLILLALMTIDAIIL).

Its subcellular location is the cell membrane. This is an uncharacterized protein from Mycobacterium tuberculosis (strain CDC 1551 / Oshkosh).